Consider the following 318-residue polypeptide: Mediator of RNA polymerase II transcription subunit 3 (318 aa).

Residues 134–156 (SAAGITKTSSGNDGNTTGSTANT) show a composition bias toward polar residues. A disordered region spans residues 134–225 (SAAGITKTSS…PSLKQIPNTQ (92 aa)). A compositionally biased stretch (low complexity) spans 192–217 (HTGPATAPTTSNSAASAAAAAANTPS).

Belongs to the Mediator complex subunit 3 family. As to quaternary structure, component of the Mediator complex.

It localises to the nucleus. Its function is as follows. Component of the Mediator complex, a coactivator involved in regulated gene transcription of nearly all RNA polymerase II-dependent genes. Mediator functions as a bridge to convey information from gene-specific regulatory proteins to the basal RNA polymerase II transcription machinery. Mediator is recruited to promoters by direct interactions with regulatory proteins and serves as a scaffold for the assembly of a functional preinitiation complex with RNA polymerase II and the general transcription factors. The protein is Mediator of RNA polymerase II transcription subunit 3 (PGD1) of Kluyveromyces lactis (strain ATCC 8585 / CBS 2359 / DSM 70799 / NBRC 1267 / NRRL Y-1140 / WM37) (Yeast).